Here is a 247-residue protein sequence, read N- to C-terminus: 5-oxoprolinase subunit A (247 aa).

This sequence belongs to the LamB/PxpA family. In terms of assembly, forms a complex composed of PxpA, PxpB and PxpC.

The enzyme catalyses 5-oxo-L-proline + ATP + 2 H2O = L-glutamate + ADP + phosphate + H(+). In terms of biological role, catalyzes the cleavage of 5-oxoproline to form L-glutamate coupled to the hydrolysis of ATP to ADP and inorganic phosphate. This Vibrio vulnificus (strain CMCP6) protein is 5-oxoprolinase subunit A.